The sequence spans 604 residues: Phosphomethylpyrimidine synthase (604 aa).

Substrate-binding positions include asparagine 218, methionine 247, tyrosine 276, histidine 312, serine 332 to glycine 334, aspartate 373 to arginine 376, and glutamate 412. Position 416 (histidine 416) interacts with Zn(2+). Residue tyrosine 439 coordinates substrate. Histidine 480 lines the Zn(2+) pocket. 3 residues coordinate [4Fe-4S] cluster: cysteine 560, cysteine 563, and cysteine 568.

Belongs to the ThiC family. In terms of assembly, homodimer. Requires [4Fe-4S] cluster as cofactor.

The enzyme catalyses 5-amino-1-(5-phospho-beta-D-ribosyl)imidazole + S-adenosyl-L-methionine = 4-amino-2-methyl-5-(phosphooxymethyl)pyrimidine + CO + 5'-deoxyadenosine + formate + L-methionine + 3 H(+). The protein operates within cofactor biosynthesis; thiamine diphosphate biosynthesis. Its function is as follows. Catalyzes the synthesis of the hydroxymethylpyrimidine phosphate (HMP-P) moiety of thiamine from aminoimidazole ribotide (AIR) in a radical S-adenosyl-L-methionine (SAM)-dependent reaction. This Zymomonas mobilis subsp. mobilis (strain ATCC 31821 / ZM4 / CP4) protein is Phosphomethylpyrimidine synthase.